The chain runs to 275 residues: Gap junction gamma-3 protein (275 aa).

The Cytoplasmic segment spans residues 1 to 22; sequence MCGSFLRRVAAEESRHPTPVGR. The helical transmembrane segment at 23–43 threads the bilayer; it reads LLLPALLGLRLVLLAAGGTGV. The Extracellular segment spans residues 44 to 77; sequence FGGGEEQSEFVCHTQQAGCKAVCYDAFHPLSPLR. A helical membrane pass occupies residues 78–98; sequence FWAFQVTLVAVPSALYMGFIL. The Cytoplasmic segment spans residues 99 to 134; the sequence is YHVIWHWEASEKVKTEEETLSQGEKGGEASRAGSSR. The helical transmembrane segment at 135 to 155 threads the bilayer; the sequence is LLWAYVAQLGVRLALEGAALG. At 156 to 196 the chain is on the extracellular side; it reads GQYHLYGFRMPSSFVCRLEPCLGSTNCYLSRPSEKSIFLKT. The helical transmembrane segment at 197 to 217 threads the bilayer; that stretch reads MFGVTGLCLLFTLLELVLLGL. The Cytoplasmic segment spans residues 218 to 275; it reads GRWWRIWRHKSPSSNYSPTSQSAKRCKAPTDNFPVVEIRERPGEAGERGSEVPLSARP. Over residues 254–267 the composition is skewed to basic and acidic residues; it reads EIRERPGEAGERGS. Residues 254–275 form a disordered region; that stretch reads EIRERPGEAGERGSEVPLSARP.

This sequence belongs to the connexin family. Gamma-type subfamily. As to quaternary structure, a connexon is composed of a hexamer of connexins.

The protein localises to the cell membrane. It is found in the cell junction. Its subcellular location is the gap junction. Functionally, one gap junction consists of a cluster of closely packed pairs of transmembrane channels, the connexons, through which materials of low MW diffuse from one cell to a neighboring cell. The polypeptide is Gap junction gamma-3 protein (GJC3) (Bos taurus (Bovine)).